We begin with the raw amino-acid sequence, 554 residues long: Probable phospholipase D F09G2.8 (554 aa).

At 1-123 (MPLRLINFRQ…GNSRNRIIKP (123 aa)) the chain is on the cytoplasmic side. Residues 124–144 (ACVPISIVSLFIIALVFLPLF) form a helical; Signal-anchor for type II membrane protein membrane-spanning segment. Residues 145–554 (NEEDLASPIK…DWNSEYSKDL (410 aa)) are Extracellular-facing. N-linked (GlcNAc...) asparagine glycosylation is found at N181, N208, N244, and N266. In terms of domain architecture, PLD phosphodiesterase 1 spans 272–299 (GSGIIHTKFILSDIATLYIGSANMDWKS). Catalysis depends on residues H277, K279, and D284. Residues N333, N350, N468, and N513 are each glycosylated (N-linked (GlcNAc...) asparagine). Residues 492 to 518 (FTRVNHAKYMVTEDIAYIGTSNWSGDY) form the PLD phosphodiesterase 2 domain.

It belongs to the phospholipase D family.

Its subcellular location is the membrane. The enzyme catalyses a 1,2-diacyl-sn-glycero-3-phosphocholine + H2O = a 1,2-diacyl-sn-glycero-3-phosphate + choline + H(+). This is Probable phospholipase D F09G2.8 from Caenorhabditis elegans.